Reading from the N-terminus, the 559-residue chain is Tissue-type plasminogen activator (559 aa).

The N-terminal stretch at 1–17 (MKRELLCVLLLCGLAFP) is a signal peptide. Positions 18-29 (LPDQGIHGRFRR) are excised as a propeptide. A propeptide spans 30 to 32 (GAR) (removed by plasmin). Residues 36 to 78 (ATCRDEPTQTTYQQHQSWLRPMLRSSRVEYCRCNSGLVQCHSV) form the Fibronectin type-I domain. 17 cysteine pairs are disulfide-bonded: Cys38–Cys68, Cys66–Cys75, Cys83–Cys94, Cys88–Cys105, Cys107–Cys116, Cys124–Cys205, Cys145–Cys187, Cys176–Cys200, Cys213–Cys294, Cys234–Cys276, Cys265–Cys289, Cys297–Cys428, Cys340–Cys356, Cys348–Cys417, Cys442–Cys516, Cys474–Cys490, and Cys506–Cys534. The important for binding to annexin A2 stretch occupies residues 39–49 (RDEPTQTTYQQ). The 39-residue stretch at 79-117 (PVRSCSEPRCFNGGTCQQALYFSDFVCQCPDGFVGKRCD) folds into the EGF-like domain. 2 Kringle domains span residues 124–205 (CFEE…TPAC) and 213–294 (CYVG…MSPC). N-linked (GlcNAc...) asparagine glycosylation occurs at Asn149. Residues 309–558 (IKGGLYTDIT…YLDWIHDNMK (250 aa)) form the Peptidase S1 domain. Residues His355 and Asp404 each act as charge relay system in the active site. Asn481 is a glycosylation site (N-linked (GlcNAc...) asparagine). The active-site Charge relay system is Ser510.

This sequence belongs to the peptidase S1 family. As to quaternary structure, heterodimer of chain A and chain B held by a disulfide bond. Binds to fibrin with high affinity. This interaction leads to an increase in the catalytic efficiency of the enzyme due to an increase in affinity for plasminogen. Similarly, binding to heparin increases the activation of plasminogen. Binds to annexin A2, cytokeratin-8, fibronectin and laminin. Binds to mannose receptor and the low-density lipoprotein receptor-related protein (LRP1); these proteins are involved in TPA clearance. Binds LRP1B; binding is followed by internalization and degradation. Forms heterodimer with SERPINA5. Interacts with SERPINE1. In complex with SERPINE1, interacts with SORL1. Post-translationally, the single chain, almost fully active enzyme, can be further processed into a two-chain fully active form by a cleavage after Arg-308 catalyzed by plasmin, tissue kallikrein or factor Xa.

It is found in the secreted. Its subcellular location is the extracellular space. It carries out the reaction Specific cleavage of Arg-|-Val bond in plasminogen to form plasmin.. Its activity is regulated as follows. Inhibited by SERPINA5. Inhibited by SERPINE1. In terms of biological role, converts the abundant, but inactive, zymogen plasminogen to plasmin by hydrolyzing a single Arg-Val bond in plasminogen. By controlling plasmin-mediated proteolysis, it plays an important role in tissue remodeling and degradation, in cell migration and many other physiopathological events. During oocyte activation, plays a role in cortical granule reaction in the zona reaction, which contributes to the block to polyspermy. This chain is Tissue-type plasminogen activator (Plat), found in Mus musculus (Mouse).